A 457-amino-acid polypeptide reads, in one-letter code: Keratin, type II cytoskeletal 7 (457 aa).

Position 2 is an N-acetylserine (S2). At S2 the chain carries Phosphoserine. The segment at S2 to E84 is head. S7 is a glycosylation site (O-linked (GlcNAc) serine). At R15 the chain carries Dimethylated arginine; alternate. R15 bears the Omega-N-methylarginine; alternate mark. Phosphoserine is present on residues S47 and S65. The segment at E84–L120 is coil 1A. Residues E85 to L397 enclose the IF rod domain. At T91 the chain carries Phosphothreonine. A linker 1 region spans residues Q121 to Q138. Residue K124 forms a Glycyl lysine isopeptide (Lys-Gly) (interchain with G-Cter in SUMO2) linkage. The tract at residues I139–L230 is coil 1B. K173 bears the N6-acetyllysine mark. A phosphoserine mark is found at S211, S246, and S248. Residues Q231–I254 are linker 12. The coil 2 stretch occupies residues I255–E393. Residues K259 and K280 each participate in a glycyl lysine isopeptide (Lys-Gly) (interchain with G-Cter in SUMO2) cross-link. T283 is subject to Phosphothreonine. Residues K290 and K325 each participate in a glycyl lysine isopeptide (Lys-Gly) (interchain with G-Cter in SUMO2) cross-link. A tail region spans residues E394–N457.

It belongs to the intermediate filament family. In terms of assembly, heterotetramer of two type I and two type II keratins. Interacts with eukaryotic translation initiator factor 3 (eIF3) subunit EIF3S10. Interacts with GPER1. Arg-15 is dimethylated, probably to asymmetric dimethylarginine. As to expression, expressed in most simple epithelia tested including liver, lactating mammary gland, lung, kidney, stomach, duodenum, colon, oviduct, uterus, pancreas, epididymis, prostate, preputial gland and mesothelium, and in most stratified epithelia tested including dorsal skin, paw/toe, tail, tongue, cervix, forestomach, and bladder. Also expressed in Henle layer of the inner root sheath of whisker follicle.

Functionally, blocks interferon-dependent interphase and stimulates DNA synthesis in cells. This Mus musculus (Mouse) protein is Keratin, type II cytoskeletal 7.